The primary structure comprises 190 residues: Elongation factor P-like protein (190 aa).

The protein belongs to the elongation factor P family.

The polypeptide is Elongation factor P-like protein (Marinomonas sp. (strain MWYL1)).